Reading from the N-terminus, the 150-residue chain is Cytochrome c oxidase subunit 5A, mitochondrial (150 aa).

The N-terminal 41 residues, 1–41 (MLGAALRRCAVAATTWAGPRGLLHSARTPGPAAAIQSVRCY), are a transit peptide targeting the mitochondrion. The SIFI-degron signature appears at 2–20 (LGAALRRCAVAATTWAGPR). Lys-87 and Lys-113 each carry N6-acetyllysine. At Thr-141 the chain carries Phosphothreonine.

This sequence belongs to the cytochrome c oxidase subunit 5A family. Component of the cytochrome c oxidase (complex IV, CIV), a multisubunit enzyme composed of 14 subunits. The complex is composed of a catalytic core of 3 subunits MT-CO1, MT-CO2 and MT-CO3, encoded in the mitochondrial DNA, and 11 supernumerary subunits COX4I, COX5A, COX5B, COX6A, COX6B, COX6C, COX7A, COX7B, COX7C, COX8 and NDUFA4, which are encoded in the nuclear genome. The complex exists as a monomer or a dimer and forms supercomplexes (SCs) in the inner mitochondrial membrane with NADH-ubiquinone oxidoreductase (complex I, CI) and ubiquinol-cytochrome c oxidoreductase (cytochrome b-c1 complex, complex III, CIII), resulting in different assemblies (supercomplex SCI(1)III(2)IV(1) and megacomplex MCI(2)III(2)IV(2)). Interacts with AFG1L. Interacts with RAB5IF. In terms of processing, in response to mitochondrial stress, the precursor protein is ubiquitinated by the SIFI complex in the cytoplasm before mitochondrial import, leading to its degradation. Within the SIFI complex, UBR4 initiates ubiquitin chain that are further elongated or branched by KCMF1.

It is found in the mitochondrion inner membrane. It participates in energy metabolism; oxidative phosphorylation. Functionally, component of the cytochrome c oxidase, the last enzyme in the mitochondrial electron transport chain which drives oxidative phosphorylation. The respiratory chain contains 3 multisubunit complexes succinate dehydrogenase (complex II, CII), ubiquinol-cytochrome c oxidoreductase (cytochrome b-c1 complex, complex III, CIII) and cytochrome c oxidase (complex IV, CIV), that cooperate to transfer electrons derived from NADH and succinate to molecular oxygen, creating an electrochemical gradient over the inner membrane that drives transmembrane transport and the ATP synthase. Cytochrome c oxidase is the component of the respiratory chain that catalyzes the reduction of oxygen to water. Electrons originating from reduced cytochrome c in the intermembrane space (IMS) are transferred via the dinuclear copper A center (CU(A)) of subunit 2 and heme A of subunit 1 to the active site in subunit 1, a binuclear center (BNC) formed by heme A3 and copper B (CU(B)). The BNC reduces molecular oxygen to 2 water molecules using 4 electrons from cytochrome c in the IMS and 4 protons from the mitochondrial matrix. The sequence is that of Cytochrome c oxidase subunit 5A, mitochondrial (COX5A) from Macaca mulatta (Rhesus macaque).